Reading from the N-terminus, the 83-residue chain is Early lactation protein (83 aa).

3 N-linked (GlcNAc...) asparagine glycosylation sites follow: Asn14, Asn31, and Asn42. In terms of domain architecture, BPTI/Kunitz inhibitor spans 23–73 (CLLPPVRGNCSSQILHYFYNTTSRTCETFIYSGCNGNRNNFNSEEYCLKTC). 3 cysteine pairs are disulfide-bonded: Cys23–Cys73, Cys32–Cys56, and Cys48–Cys69.

Post-translationally, N-glycosylated. Found in the whey fraction of milk.

It localises to the secreted. In Notamacropus eugenii (Tammar wallaby), this protein is Early lactation protein (ELP).